The following is a 627-amino-acid chain: Serine/threonine-protein kinase Nek5 (627 aa).

Positions 4–255 (FHLIKIIGEG…VTSLLKRPFL (252 aa)) constitute a Protein kinase domain. Residues 10–18 (IGEGTFGKV) and Lys-33 contribute to the ATP site. Asp-124 (proton acceptor) is an active-site residue. Over residues 563–580 (QLEPGSDEDDIKFEESED) the composition is skewed to acidic residues. Disordered regions lie at residues 563 to 582 (QLEP…EDEL) and 591 to 627 (EKLA…KKLQ). A compositionally biased stretch (basic and acidic residues) spans 609 to 619 (NAEEPGEKEKT).

The protein belongs to the protein kinase superfamily. NEK Ser/Thr protein kinase family. NIMA subfamily. It depends on Mg(2+) as a cofactor.

The protein localises to the cell projection. It is found in the cilium. Its subcellular location is the flagellum. It catalyses the reaction L-seryl-[protein] + ATP = O-phospho-L-seryl-[protein] + ADP + H(+). It carries out the reaction L-threonyl-[protein] + ATP = O-phospho-L-threonyl-[protein] + ADP + H(+). In Mus musculus (Mouse), this protein is Serine/threonine-protein kinase Nek5 (Nek5).